The sequence spans 141 residues: HTH-type transcriptional repressor NsrR (141 aa).

The region spanning 2–129 (QLTSFTDYGL…DNYTLADLVE (128 aa)) is the HTH rrf2-type domain. The H-T-H motif DNA-binding region spans 28–51 (ISEVTEVYGVSRNHMVKIINQLSR). C91, C96, and C102 together coordinate [2Fe-2S] cluster.

It depends on [2Fe-2S] cluster as a cofactor.

Its function is as follows. Nitric oxide-sensitive repressor of genes involved in protecting the cell against nitrosative stress. May require iron for activity. This chain is HTH-type transcriptional repressor NsrR, found in Salmonella choleraesuis (strain SC-B67).